A 144-amino-acid chain; its full sequence is MTHRRATLCAMASVALVSAAQLGMRWSMSRLPSPVQWLEMQEHAQLDLSALRVVCASITAYALSMLFWLLALRVLPLSRAYSLLSISYALVYTLAATLPFFHETFTVSKTVGVSLIVAGVLTINLRRLPRPSPQDLSHENQRFR.

Residues 1–6 lie on the Cytoplasmic side of the membrane; it reads MTHRRA. The helical transmembrane segment at 7-24 threads the bilayer; it reads TLCAMASVALVSAAQLGM. Residues 25–56 are Periplasmic-facing; it reads RWSMSRLPSPVQWLEMQEHAQLDLSALRVVCA. A helical membrane pass occupies residues 57–77; the sequence is SITAYALSMLFWLLALRVLPL. The Cytoplasmic segment spans residues 78 to 80; that stretch reads SRA. The helical transmembrane segment at 81-101 threads the bilayer; it reads YSLLSISYALVYTLAATLPFF. Residues 102-104 are Periplasmic-facing; that stretch reads HET. The chain crosses the membrane as a helical span at residues 105–125; that stretch reads FTVSKTVGVSLIVAGVLTINL. Over 126–144 the chain is Cytoplasmic; that stretch reads RRLPRPSPQDLSHENQRFR.

The protein belongs to the ArnF family. Heterodimer of ArnE and ArnF.

The protein resides in the cell inner membrane. It participates in bacterial outer membrane biogenesis; lipopolysaccharide biosynthesis. In terms of biological role, translocates 4-amino-4-deoxy-L-arabinose-phosphoundecaprenol (alpha-L-Ara4N-phosphoundecaprenol) from the cytoplasmic to the periplasmic side of the inner membrane. In Pseudomonas syringae pv. syringae (strain B728a), this protein is Probable 4-amino-4-deoxy-L-arabinose-phosphoundecaprenol flippase subunit ArnF.